Consider the following 464-residue polypeptide: Armadillo repeat-containing protein 6 homolog (464 aa).

T9 carries the post-translational modification Phosphothreonine. 4 ARM repeats span residues 235–275, 287–331, 332–374, and 375–418; these read AHEH…TLAV, GGLK…QQGV, APII…FDTG, and IAEV…ISFG.

The protein belongs to the ARMC6 family.

The chain is Armadillo repeat-containing protein 6 homolog from Drosophila melanogaster (Fruit fly).